The chain runs to 602 residues: Protein indeterminate-domain 5, chloroplastic (602 aa).

Composition is skewed to low complexity over residues 1–10 and 21–30; these read MAASSSSAAS and HLLPPNSSAA. A chloroplast-targeting transit peptide spans 1–50; sequence MAASSSSAASFFGVRQDDQSHLLPPNSSAAAPPPPPPHHQAPLPPLEAPP. The disordered stretch occupies residues 1-65; the sequence is MAASSSSAAS…NQPRTPNSDA (65 aa). Pro residues predominate over residues 31–48; that stretch reads APPPPPPHHQAPLPPLEA. Threonine 60 bears the Phosphothreonine mark. Residue serine 71 is modified to Phosphoserine. 2 consecutive C2H2-type zinc fingers follow at residues 81–103 and 122–152; these read FICE…RRGH and YLCP…YRKH. The segment at 157-180 adopts a C2H2-type 2; degenerate zinc-finger fold; sequence WKCDKCSKRYAVQSDWKAHSKTCG. Zn(2+)-binding residues include cysteine 159, cysteine 162, histidine 175, cysteine 179, cysteine 186, cysteine 188, histidine 201, and cysteine 205. Residues 184 to 207 form a CCHC-type 2; atypical zinc finger; that stretch reads YRCDCGTLFSRRDSFITHRAFCDA. The tract at residues 194–206 is SHR-binding; it reads RRDSFITHRAFCD. Disordered stretches follow at residues 443-467 and 537-602; these read KAAQ…NNAS and KSMS…HASF. Composition is skewed to low complexity over residues 448–467, 546–560, and 570–579; these read GSTS…NNAS, QQQQ…QQQQ, and SSSDSADRSS.

In terms of assembly, binds to RGA and SCL3 competitively. As to expression, highly expressed in leaf tissues.

The protein resides in the plastid. The protein localises to the chloroplast. Functionally, transcription factor acting as a positive regulator of the starch synthase SS4. Controls chloroplast development and starch granule formation. Binds DNA via its zinc fingers. Recognizes and binds to SCL3 promoter sequence 5'-AGACAA-3' to promote its expression when in complex with RGA. This is Protein indeterminate-domain 5, chloroplastic from Arabidopsis thaliana (Mouse-ear cress).